The following is a 545-amino-acid chain: Lysine--tRNA ligase (545 aa).

Positions Val33–Arg41 match the 'HIGH' region motif. Positions Asp288 to Ser292 match the 'KMSKS' region motif.

This sequence belongs to the class-I aminoacyl-tRNA synthetase family.

The protein resides in the cytoplasm. The enzyme catalyses tRNA(Lys) + L-lysine + ATP = L-lysyl-tRNA(Lys) + AMP + diphosphate. This chain is Lysine--tRNA ligase (lysS), found in Aeropyrum pernix (strain ATCC 700893 / DSM 11879 / JCM 9820 / NBRC 100138 / K1).